Consider the following 526-residue polypeptide: Keratin, type I cytoskeletal 10 (526 aa).

The span at 1–16 shows a compositional bias: low complexity; sequence MSVRFSSNSRQYSSAR. Residues 1–40 are disordered; it reads MSVRFSSNSRQYSSARSGGGGGGGGGGSSIRVSSTKSSLG. The interval 1–144 is head; the sequence is MSVRFSSNSR…GDGGGLLSGN (144 aa). Phosphoserine occurs at positions 17, 38, 49, 52, and 169. Positions 17–28 are enriched in gly residues; it reads SGGGGGGGGGGS. The coil 1A stretch occupies residues 145 to 180; the sequence is EKVTMQNLNDRLASYMNKVRDLEESNYELEGKIKEW. Positions 145 to 459 constitute an IF rod domain; sequence EKVTMQNLND…SLLEGEGGYV (315 aa). The segment at 181–201 is linker 1; that stretch reads YEKHGNSSQREPRDYSKYYKT. The segment at 202–293 is coil 1B; the sequence is IEDLKGQIVN…KNHEEEMKDL (92 aa). The segment at 294–316 is linker 12; sequence QNVSTGDVNVEMNAAPGVDLTQL. A coil 2 region spans residues 317-455; that stretch reads LNNMRNQYEQ…QTYRSLLEGE (139 aa). Residues 456 to 526 are tail; it reads GGYVGNLQIT…IESETKKHFY (71 aa).

It belongs to the intermediate filament family. In terms of assembly, heterotetramer of two type I and two type II keratins. Heterodimer with KRT1. Two heterodimers of KRT1 and KRT10 form a heterotetramer. The KRT10 subunit in the heterotetramer is probably disulfide-linked.

It localises to the secreted. It is found in the extracellular space. The protein localises to the cell surface. The protein resides in the cytoplasm. Plays a role in the establishment of the epidermal barrier on plantar skin. Involved in the maintenance of cell layer development and keratin filament bundles in suprabasal cells of the epithelium. In Rattus norvegicus (Rat), this protein is Keratin, type I cytoskeletal 10.